Consider the following 864-residue polypeptide: Leucine--tRNA ligase (864 aa).

The 'HIGH' region motif lies at 42–52 (PYPSGKLHMGH). The 'KMSKS' region motif lies at 619–623 (KMSKS). Lysine 622 contacts ATP.

The protein belongs to the class-I aminoacyl-tRNA synthetase family.

It localises to the cytoplasm. It catalyses the reaction tRNA(Leu) + L-leucine + ATP = L-leucyl-tRNA(Leu) + AMP + diphosphate. In Wigglesworthia glossinidia brevipalpis, this protein is Leucine--tRNA ligase.